A 300-amino-acid chain; its full sequence is Cell surface glycoprotein CD200 receptor 1-A (300 aa).

The first 24 residues, 1-24, serve as a signal peptide directing secretion; that stretch reads MEIAGKAVCVFLLLAIIKLRRSEG. Residues 25–124 form the Ig-like V-type domain; it reads INRVSANLGH…GNFHRLYHLT (100 aa). The Extracellular portion of the chain corresponds to 25 to 213; the sequence is INRVSANLGH…SINCSSSYRD (189 aa). 2 cysteine pairs are disulfide-bonded: cysteine 40–cysteine 108 and cysteine 143–cysteine 192. N-linked (GlcNAc...) asparagine glycosylation is found at asparagine 45, asparagine 76, asparagine 105, asparagine 171, asparagine 200, and asparagine 206. Residues 122–206 enclose the Ig-like C2-type domain; sequence HLTVIVAPRM…ATLNETKSIN (85 aa). The chain crosses the membrane as a helical span at residues 214–234; the sequence is LILCIAIILSFLIIITFMAVI. Residues 235–300 are Cytoplasmic-facing; the sequence is YYLKLHGCRF…NLPQGQSPAT (66 aa).

Belongs to the CD200R family. In terms of processing, glycosylated. Post-translationally, phosphorylated. Highly expressed in macrophages, peripheral blood lymphocytes (PBL) and peripheral blood mononuclear cells (PBMC). Weakly expressed in bursa, thymus, spleen, liver and brain.

The protein resides in the membrane. It localises to the secreted. In Gallus gallus (Chicken), this protein is Cell surface glycoprotein CD200 receptor 1-A (CD200R1A).